The primary structure comprises 411 residues: Glycogen synthase kinase-3 homolog MsK-3 (411 aa).

One can recognise a Protein kinase domain in the interval 74-358 (YMAERVVGHG…ALEALVHPFY (285 aa)). Residues 80-88 (VGHGSFGVV) and Lys-103 contribute to the ATP site. Residue Asp-199 is the Proton acceptor of the active site. A Phosphotyrosine modification is found at Tyr-234.

This sequence belongs to the protein kinase superfamily. CMGC Ser/Thr protein kinase family. GSK-3 subfamily. Absent in leaves and petioles, very low levels are seen in the stems and roots while a moderate expression is seen in the nodes.

The enzyme catalyses L-seryl-[protein] + ATP = O-phospho-L-seryl-[protein] + ADP + H(+). The catalysed reaction is L-threonyl-[protein] + ATP = O-phospho-L-threonyl-[protein] + ADP + H(+). This chain is Glycogen synthase kinase-3 homolog MsK-3 (MSK-3), found in Medicago sativa (Alfalfa).